Here is a 209-residue protein sequence, read N- to C-terminus: MYNKVLIIDDHPVLRFAVRVLMEKEGFEVIGETDNGIDGLKIAREKIPNLVVLDIGIPKLDGLEVIARLQSLGLPLRVLVLTGQPPSLFARRCLNSGAAGFVCKHENLHEVINAAKAVMAGYTYFPSTTLSEMRMGDNAKSDSTLISVLSNRELTVLQLLAQGMSNKDIADSMFLSNKTVSTYKTRLLQKLNATSLVELIDLAKRNNLA.

The region spanning 4–119 (KVLIIDDHPV…EVINAAKAVM (116 aa)) is the Response regulatory domain. Asp54 is subject to 4-aspartylphosphate. The region spanning 142 to 207 (DSTLISVLSN…ELIDLAKRNN (66 aa)) is the HTH luxR-type domain. Residues 166 to 185 (NKDIADSMFLSNKTVSTYKT) constitute a DNA-binding region (H-T-H motif).

Homodimer. Post-translationally, phosphorylated by BvgS.

Member of the two-component regulatory system BvgS/BvgA. Activates the transcription of virulence genes. The protein is Virulence factors putative positive transcription regulator BvgA (bvgA) of Bordetella bronchiseptica (strain ATCC BAA-588 / NCTC 13252 / RB50) (Alcaligenes bronchisepticus).